Consider the following 312-residue polypeptide: uncharacterized protein (312 aa).

Positions 1–19 (MFSKYLVTASSLFVALTSA) are cleaved as a signal peptide.

This is an uncharacterized protein from Saccharomyces cerevisiae (strain ATCC 204508 / S288c) (Baker's yeast).